Consider the following 494-residue polypeptide: Inosine-5'-monophosphate dehydrogenase (494 aa).

CBS domains lie at 93 to 154 and 158 to 217; these read IIRN…DEKI and MTTN…CKDS. Residues D251 and 301 to 303 contribute to the NAD(+) site; that span reads GIG. The K(+) site is built by G303 and G305. An IMP-binding site is contributed by S306. C308 contacts K(+). C308 serves as the catalytic Thioimidate intermediate. IMP is bound by residues 341 to 343, 364 to 365, and 388 to 392; these read DGG, GS, and YRGMG. R406 acts as the Proton acceptor in catalysis. An IMP-binding site is contributed by E421. K(+)-binding residues include E475, S476, and H477.

This sequence belongs to the IMPDH/GMPR family. As to quaternary structure, homotetramer. K(+) is required as a cofactor.

The enzyme catalyses IMP + NAD(+) + H2O = XMP + NADH + H(+). The protein operates within purine metabolism; XMP biosynthesis via de novo pathway; XMP from IMP: step 1/1. Its activity is regulated as follows. Mycophenolic acid (MPA) is a non-competitive inhibitor that prevents formation of the closed enzyme conformation by binding to the same site as the amobile flap. In contrast, mizoribine monophosphate (MZP) is a competitive inhibitor that induces the closed conformation. MPA is a potent inhibitor of mammalian IMPDHs but a poor inhibitor of the bacterial enzymes. MZP is a more potent inhibitor of bacterial IMPDH. Catalyzes the conversion of inosine 5'-phosphate (IMP) to xanthosine 5'-phosphate (XMP), the first committed and rate-limiting step in the de novo synthesis of guanine nucleotides, and therefore plays an important role in the regulation of cell growth. The polypeptide is Inosine-5'-monophosphate dehydrogenase (Chlorobaculum tepidum (strain ATCC 49652 / DSM 12025 / NBRC 103806 / TLS) (Chlorobium tepidum)).